A 190-amino-acid polypeptide reads, in one-letter code: Small ribosomal subunit protein uS4c (190 aa).

In terms of domain architecture, S4 RNA-binding spans 92 to 152 (RLDHVVYRAG…KSPSSAQLPP (61 aa)).

Belongs to the universal ribosomal protein uS4 family. Part of the 30S ribosomal subunit. Contacts protein S5. The interaction surface between S4 and S5 is involved in control of translational fidelity.

The protein localises to the plastid. It localises to the chloroplast. Functionally, one of the primary rRNA binding proteins, it binds directly to 16S rRNA where it nucleates assembly of the body of the 30S subunit. Its function is as follows. With S5 and S12 plays an important role in translational accuracy. This Cyanidioschyzon merolae (strain NIES-3377 / 10D) (Unicellular red alga) protein is Small ribosomal subunit protein uS4c (rps4).